The following is a 216-amino-acid chain: Nucleoside triphosphate pyrophosphatase (216 aa).

The Proton acceptor role is filled by D86.

The protein belongs to the Maf family. The cofactor is a divalent metal cation.

The protein resides in the cytoplasm. It carries out the reaction a ribonucleoside 5'-triphosphate + H2O = a ribonucleoside 5'-phosphate + diphosphate + H(+). The enzyme catalyses a 2'-deoxyribonucleoside 5'-triphosphate + H2O = a 2'-deoxyribonucleoside 5'-phosphate + diphosphate + H(+). Its function is as follows. Nucleoside triphosphate pyrophosphatase. May have a dual role in cell division arrest and in preventing the incorporation of modified nucleotides into cellular nucleic acids. The sequence is that of Nucleoside triphosphate pyrophosphatase from Dictyostelium discoideum (Social amoeba).